A 185-amino-acid chain; its full sequence is Peptidyl-tRNA hydrolase (185 aa).

Position 14 (Y14) interacts with tRNA. The active-site Proton acceptor is the H19. Residues Y64, N66, and N112 each coordinate tRNA.

This sequence belongs to the PTH family. As to quaternary structure, monomer.

It is found in the cytoplasm. The catalysed reaction is an N-acyl-L-alpha-aminoacyl-tRNA + H2O = an N-acyl-L-amino acid + a tRNA + H(+). In terms of biological role, hydrolyzes ribosome-free peptidyl-tRNAs (with 1 or more amino acids incorporated), which drop off the ribosome during protein synthesis, or as a result of ribosome stalling. Catalyzes the release of premature peptidyl moieties from peptidyl-tRNA molecules trapped in stalled 50S ribosomal subunits, and thus maintains levels of free tRNAs and 50S ribosomes. The sequence is that of Peptidyl-tRNA hydrolase from Lactiplantibacillus plantarum (strain ATCC BAA-793 / NCIMB 8826 / WCFS1) (Lactobacillus plantarum).